The following is a 108-amino-acid chain: Translation initiation factor 1A (108 aa).

In terms of domain architecture, S1-like spans 11-85; that stretch reads PSRDVPRPEE…NRCDILYKYG (75 aa).

Belongs to the eIF-1A family.

Functionally, seems to be required for maximal rate of protein biosynthesis. Enhances ribosome dissociation into subunits and stabilizes the binding of the initiator Met-tRNA(I) to 40 S ribosomal subunits. This is Translation initiation factor 1A (eIF1A) from Saccharolobus solfataricus (strain ATCC 35092 / DSM 1617 / JCM 11322 / P2) (Sulfolobus solfataricus).